The following is a 131-amino-acid chain: UPF0146 protein PYRAB01940 (131 aa).

It belongs to the UPF0146 family.

This chain is UPF0146 protein PYRAB01940, found in Pyrococcus abyssi (strain GE5 / Orsay).